The chain runs to 449 residues: Tubulin alpha-2 chain (449 aa).

Glutamine 11 contributes to the GTP binding site. Residue lysine 40 is modified to N6-acetyllysine. GTP is bound by residues glutamate 71, serine 140, glycine 144, threonine 145, threonine 179, asparagine 206, and asparagine 228. A Mg(2+)-binding site is contributed by glutamate 71. Glutamate 254 is an active-site residue.

The protein belongs to the tubulin family. In terms of assembly, dimer of alpha and beta chains. A typical microtubule is a hollow water-filled tube with an outer diameter of 25 nm and an inner diameter of 15 nM. Alpha-beta heterodimers associate head-to-tail to form protofilaments running lengthwise along the microtubule wall with the beta-tubulin subunit facing the microtubule plus end conferring a structural polarity. Microtubules usually have 13 protofilaments but different protofilament numbers can be found in some organisms and specialized cells. It depends on Mg(2+) as a cofactor. Undergoes a tyrosination/detyrosination cycle, the cyclic removal and re-addition of a C-terminal tyrosine residue by the enzymes tubulin tyrosine carboxypeptidase (TTCP) and tubulin tyrosine ligase (TTL), respectively. Post-translationally, acetylation of alpha chains at Lys-40 stabilizes microtubules and affects affinity and processivity of microtubule motors. This modification has a role in multiple cellular functions, ranging from cell motility, cell cycle progression or cell differentiation to intracellular trafficking and signaling. During the early stages of oogenesis lky/Alpha-tubulin N-acetyltransferase 2 is the main acetyltransferase responsible for Lys-40 acetylation in germline cells while Atat/alpha-tubulin N-acetyltransferase 1 is the main acetyltransferase responsible for Lys-40 acetylation in somatic cells.

It is found in the cytoplasm. It localises to the cytoskeleton. It carries out the reaction GTP + H2O = GDP + phosphate + H(+). Its function is as follows. Tubulin is the major constituent of microtubules, a cylinder consisting of laterally associated linear protofilaments composed of alpha- and beta-tubulin heterodimers. Microtubules grow by the addition of GTP-tubulin dimers to the microtubule end, where a stabilizing cap forms. Below the cap, tubulin dimers are in GDP-bound state, owing to GTPase activity of alpha-tubulin. This is Tubulin alpha-2 chain (alphaTub85E) from Drosophila melanogaster (Fruit fly).